We begin with the raw amino-acid sequence, 342 residues long: Fatty acid desaturase 6 (342 aa).

A run of 2 helical transmembrane segments spans residues 39–59 (GVDC…FLCL) and 63–83 (NILA…TLTV). A Histidine box-1 motif is present at residues 87 to 91 (HLATH). Residues 100 to 120 (WSKILMIFFLEVCTAFSAEFA) form a helical membrane-spanning segment. A Histidine box-2 motif is present at residues 124-128 (HVNLH). Helical transmembrane passes span 151–171 (YVYM…VALE) and 185–205 (LGFI…VSGF). The Histidine box-3 signature appears at 277–281 (HVEHH).

This sequence belongs to the fatty acid desaturase type 1 family.

It is found in the membrane. It functions in the pathway lipid metabolism; fatty acid metabolism. The sequence is that of Fatty acid desaturase 6 (Fads6) from Mus musculus (Mouse).